A 352-amino-acid chain; its full sequence is C5a anaphylatoxin chemotactic receptor 1 (352 aa).

Residues 1–38 (MASMNFSPPEYPDYGTATLDPNIFVDESLNTPKLSVPD) are Extracellular-facing. Y11 and Y14 each carry sulfotyrosine. A helical membrane pass occupies residues 39–65 (MIALVIFVMVFLVGVPGNFLVVWVTGF). The Cytoplasmic portion of the chain corresponds to 66–70 (EVRRT). Residues 71–94 (INAIWFLNLAVADLLSCLALPILF) form a helical membrane-spanning segment. Over 95 to 111 (SSIVQQGYWPFGNAACR) the chain is Extracellular. The cysteines at positions 110 and 189 are disulfide-linked. Residues 112–133 (ILPSLILLNMYASILLLTTISA) form a helical membrane-spanning segment. Over 134 to 154 (DRFVLVFNPIWCQNYRGPQLA) the chain is Cytoplasmic. A helical membrane pass occupies residues 155 to 175 (WAACSVAWAVALLLTVPSFIF). Residues 176–202 (RGVHTEYFPFWMTCGVDYSGVGVLVER) lie on the Extracellular side of the membrane. The helical transmembrane segment at 203–228 (GVAILRLLMGFLGPLVILSICYTFLL) threads the bilayer. The Cytoplasmic portion of the chain corresponds to 229–244 (IRTWSRKATRSTKTLK). Residues 245–267 (VVVAVVVSFFVLWLPYQVTGMMM) form a helical membrane-spanning segment. The Extracellular segment spans residues 268–284 (ALFYKHSESFRRVSRLD). A helical transmembrane segment spans residues 285 to 305 (SLCVAVAYINCCINPIIYVLA). Topologically, residues 306-352 (AQGFHSRFLKSLPARLRQVLAEESVGRDSKSITLSTVDTPAQKSQGV) are cytoplasmic. 5 positions are modified to phosphoserine: S316, S329, S334, S336, and S340.

This sequence belongs to the G-protein coupled receptor 1 family. As to quaternary structure, homodimer. May also form higher-order oligomers. Interacts (when phosphorylated) with ARRB1 and ARRB2; the interaction is associated with internalization of C5aR. Post-translationally, sulfation plays a critical role in the association of C5aR with C5a, but no significant role in the ability of the receptor to transduce a signal and mobilize calcium in response to a small peptide agonist. In terms of processing, phosphorylated on serine residues in response to C5a binding, resulting in internalization of the receptor and short-term desensitization to C5a.

The protein localises to the cell membrane. Its subcellular location is the cytoplasmic vesicle. Functionally, receptor for the chemotactic and inflammatory peptide anaphylatoxin C5a. The ligand interacts with at least two sites on the receptor: a high-affinity site on the extracellular N-terminus, and a second site in the transmembrane region which activates downstream signaling events. Receptor activation stimulates chemotaxis, granule enzyme release, intracellular calcium release and superoxide anion production. This Canis lupus familiaris (Dog) protein is C5a anaphylatoxin chemotactic receptor 1 (C5AR1).